A 463-amino-acid polypeptide reads, in one-letter code: Asparagine--tRNA ligase (463 aa).

The protein belongs to the class-II aminoacyl-tRNA synthetase family. As to quaternary structure, homodimer.

The protein localises to the cytoplasm. It carries out the reaction tRNA(Asn) + L-asparagine + ATP = L-asparaginyl-tRNA(Asn) + AMP + diphosphate + H(+). This is Asparagine--tRNA ligase from Acholeplasma laidlawii (strain PG-8A).